The sequence spans 75 residues: UPF0235 protein MSMEG_3845 (75 aa).

This sequence belongs to the UPF0235 family.

This chain is UPF0235 protein MSMEG_3845, found in Mycolicibacterium smegmatis (strain ATCC 700084 / mc(2)155) (Mycobacterium smegmatis).